A 401-amino-acid chain; its full sequence is 2-amino-3-carboxymuconate-6-semialdehyde decarboxylase (401 aa).

Zn(2+) is bound by residues His-18 and His-20. Residue Arg-59 participates in substrate binding. Zn(2+) is bound by residues His-234 and Asp-352.

The protein belongs to the metallo-dependent hydrolases superfamily. ACMSD family. As to quaternary structure, monomer.

The catalysed reaction is 2-amino-3-carboxymuconate 6-semialdehyde + H(+) = 2-aminomuconate 6-semialdehyde + CO2. It participates in secondary metabolite metabolism; quinolate metabolism. Converts alpha-amino-beta-carboxymuconate-epsilon-semialdehyde (ACMS) to alpha-aminomuconate semialdehyde (AMS). The polypeptide is 2-amino-3-carboxymuconate-6-semialdehyde decarboxylase (Caenorhabditis elegans).